The sequence spans 187 residues: Large ribosomal subunit protein uL5 (187 aa).

Belongs to the universal ribosomal protein uL5 family. In terms of assembly, part of the 50S ribosomal subunit; part of the 5S rRNA/L5/L18/L25 subcomplex. Contacts the 5S rRNA and the P site tRNA. Forms a bridge to the 30S subunit in the 70S ribosome.

Its function is as follows. This is one of the proteins that bind and probably mediate the attachment of the 5S RNA into the large ribosomal subunit, where it forms part of the central protuberance. In the 70S ribosome it contacts protein S13 of the 30S subunit (bridge B1b), connecting the 2 subunits; this bridge is implicated in subunit movement. Contacts the P site tRNA; the 5S rRNA and some of its associated proteins might help stabilize positioning of ribosome-bound tRNAs. This is Large ribosomal subunit protein uL5 from Mycobacterium sp. (strain JLS).